We begin with the raw amino-acid sequence, 509 residues long: Monofunctional riboflavin biosynthesis protein RIBA 3, chloroplastic (509 aa).

A chloroplast-targeting transit peptide spans M1–K43. The segment at A44–K302 is inactive DHBP synthase. D-ribulose 5-phosphate-binding positions include G125–D126 and R240–T244. Residues R303–A509 are GTP cyclohydrolase II. R353 to E357 is a GTP binding site. Zn(2+)-binding residues include C358, C369, and C371. GTP is bound by residues Q374, E397 to R399, and T419. Residue D431 is the Proton acceptor; for GTP cyclohydrolase activity of the active site. Catalysis depends on R433, which acts as the Nucleophile; for GTP cyclohydrolase activity. GTP-binding residues include T454 and K459.

It in the N-terminal section; belongs to the DHBP synthase family. This sequence in the C-terminal section; belongs to the GTP cyclohydrolase II family. The cofactor is Zn(2+). As to expression, expressed in leaves, shoots, roots, flowers and siliques.

The protein resides in the plastid. It is found in the chloroplast. It carries out the reaction GTP + 4 H2O = 2,5-diamino-6-hydroxy-4-(5-phosphoribosylamino)-pyrimidine + formate + 2 phosphate + 3 H(+). It functions in the pathway cofactor biosynthesis; riboflavin biosynthesis; 5-amino-6-(D-ribitylamino)uracil from GTP: step 1/4. Its function is as follows. Involved in riboflavin biosynthesis. Catalyzes the conversion of GTP to 2,5-diamino-6-ribosylamino-4(3H)-pyrimidinone 5'-phosphate (DARP), formate and pyrophosphate. RIBA2 and RIBA3 together are not able to complement the loss of function of RIBA1. The polypeptide is Monofunctional riboflavin biosynthesis protein RIBA 3, chloroplastic (RIBA3) (Arabidopsis thaliana (Mouse-ear cress)).